A 362-amino-acid polypeptide reads, in one-letter code: Chorismate synthase (362 aa).

2 residues coordinate NADP(+): Arg-48 and Arg-54. FMN-binding positions include 125–127, 238–239, Gly-286, 301–305, and Arg-327; these read RSS, NA, and KPTSS.

It belongs to the chorismate synthase family. Homotetramer. Requires FMNH2 as cofactor.

The catalysed reaction is 5-O-(1-carboxyvinyl)-3-phosphoshikimate = chorismate + phosphate. It participates in metabolic intermediate biosynthesis; chorismate biosynthesis; chorismate from D-erythrose 4-phosphate and phosphoenolpyruvate: step 7/7. Functionally, catalyzes the anti-1,4-elimination of the C-3 phosphate and the C-6 proR hydrogen from 5-enolpyruvylshikimate-3-phosphate (EPSP) to yield chorismate, which is the branch point compound that serves as the starting substrate for the three terminal pathways of aromatic amino acid biosynthesis. This reaction introduces a second double bond into the aromatic ring system. The sequence is that of Chorismate synthase from Granulibacter bethesdensis (strain ATCC BAA-1260 / CGDNIH1).